The chain runs to 2289 residues: Protein Ycf2 (2289 aa).

Position 1643-1650 (1643-1650 (GSIGTGRS)) interacts with ATP.

It belongs to the Ycf2 family.

The protein localises to the plastid. The protein resides in the chloroplast stroma. Its function is as follows. Probable ATPase of unknown function. Its presence in a non-photosynthetic plant (Epifagus virginiana) and experiments in tobacco indicate that it has an essential function which is probably not related to photosynthesis. This chain is Protein Ycf2, found in Capsella bursa-pastoris (Shepherd's purse).